Consider the following 141-residue polypeptide: Protein stum homolog (141 aa).

Ser-26 is modified (phosphoserine). Transmembrane regions (helical) follow at residues 51-71 (FPVA…GTFV) and 87-107 (RHVC…ILTA).

It belongs to the SPEC3 family. Stum subfamily.

It localises to the membrane. This chain is Protein stum homolog, found in Homo sapiens (Human).